Reading from the N-terminus, the 535-residue chain is BAR/IMD domain-containing adapter protein 2 (535 aa).

An IMD domain is found at 1–250 (MSLSRSEEMH…AQLMQQMANS (250 aa)). The stretch at 1 to 251 (MSLSRSEEMH…QLMQQMANSN (251 aa)) forms a coiled coil. Ser-262, Ser-324, Ser-326, and Ser-337 each carry phosphoserine. The disordered stretch occupies residues 308–370 (SEDYNPWADR…TLPRSSSMAA (63 aa)). Residues 321-335 (QPKSLSPPQSQSKLS) are compositionally biased toward low complexity. Residue Thr-341 is modified to Phosphothreonine. Ser-347 bears the Phosphoserine mark. Polar residues predominate over residues 349 to 368 (TPKNSYATTENKTLPRSSSM). Position 361 is a phosphothreonine (Thr-361). Ser-367, Ser-385, Ser-396, and Ser-455 each carry phosphoserine. One can recognise an SH3 domain in the interval 375 to 438 (NGRMRVKAIF…PFSYTRVLDS (64 aa)). Positions 445-486 (HMSLQQGKSSSTGNLLDKDDLALPPPDYGTSSRAFPSQTAGT) are disordered. 2 stretches are compositionally biased toward polar residues: residues 447 to 458 (SLQQGKSSSTGN) and 473 to 486 (GTSS…TAGT).

As to quaternary structure, homodimer. Interacts with CDC42 and RAC1 that have been activated by GTP binding. Binds TIAM1. Interacts with ATN1, ADGRB1, DIAPH1, EPS8, SHANK1, SHANK2, SHANK3, WASF1 and WASF2. Interacts with ENAH after recruitment of CDC42. In terms of processing, phosphorylated on tyrosine residues by INSR in response to insulin treatment. As to expression, ubiquitous.

It is found in the cytoplasm. The protein localises to the membrane. It localises to the cell projection. Its subcellular location is the filopodium. The protein resides in the ruffle. It is found in the cytoskeleton. Adapter protein that links membrane-bound small G-proteins to cytoplasmic effector proteins. Necessary for CDC42-mediated reorganization of the actin cytoskeleton and for RAC1-mediated membrane ruffling. Involved in the regulation of the actin cytoskeleton by WASF family members and the Arp2/3 complex. Plays a role in neurite growth. Acts syngeristically with ENAH to promote filipodia formation. Plays a role in the reorganization of the actin cytoskeleton in response to bacterial infection. Participates in actin bundling when associated with EPS8, promoting filopodial protrusions. The polypeptide is BAR/IMD domain-containing adapter protein 2 (Baiap2) (Rattus norvegicus (Rat)).